We begin with the raw amino-acid sequence, 423 residues long: Keratin, type I cytoskeletal 18 (423 aa).

The residue at position 2 (S2) is an N-acetylserine. The tract at residues 2–71 (SFTTRSTTFS…GLAGMGGIQT (70 aa)) is head. A phosphoserine mark is found at S7, S11, S16, and S19. Phosphoserine; alternate is present on residues S31 and S32. S31 and S32 each carry an O-linked (GlcNAc) serine; alternate glycan. At S35 the chain carries Phosphoserine. Residue Y37 is modified to Phosphotyrosine. S43 is subject to Phosphoserine. R46 carries the omega-N-methylarginine modification. A Phosphoserine; alternate modification is found at S50. S50 is a glycosylation site (O-linked (GlcNAc) serine; alternate). S52 carries the phosphoserine; by MAPKAPK2 and MAPKAPK3 modification. Residues S57 and S60 each carry the phosphoserine modification. Positions 62 to 366 (GLAGMGGIQT…EALLNIKVKL (305 aa)) are necessary for interaction with PNN. The interaction with TRADD stretch occupies residues 69–121 (IQTEKETMQDLNDRLASYLDKVKSLETENRRLESKIREHLEKKGPQGVRDWGH). The segment at 72 to 107 (EKETMQDLNDRLASYLDKVKSLETENRRLESKIREH) is coil 1A. One can recognise an IF rod domain in the interval 72-384 (EKETMQDLND…RLLEDGEDFS (313 aa)). K73 participates in a covalent cross-link: Glycyl lysine isopeptide (Lys-Gly) (interchain with G-Cter in SUMO2). 2 positions are modified to phosphoserine: S85 and S92. The linker 1 stretch occupies residues 108–125 (LEKKGPQGVRDWGHYFKI). Position 124 is an N6-acetyllysine (K124). The interval 126–217 (IEDLRAQIFA…KNHEEEVQGL (92 aa)) is coil 1B. S137 and S170 each carry phosphoserine. The segment at 218 to 241 (EAQIASSGLTVEVDAPKSQDLSKI) is linker 12. The interval 236–384 (QDLSKIMADI…RLLEDGEDFS (149 aa)) is interaction with DNAJB6. A Glycyl lysine isopeptide (Lys-Gly) (interchain with G-Cter in SUMO2) cross-link involves residue K240. Positions 242-380 (MADIRAQYEA…ATYRRLLEDG (139 aa)) are coil 2. At T295 the chain carries Phosphothreonine. Position 316 is a phosphoserine (S316). Residues K363 and K365 each participate in a glycyl lysine isopeptide (Lys-Gly) (interchain with G-Cter in SUMO2) cross-link. The tail stretch occupies residues 381–423 (EDFSLNDALDSSNSMQTVQKTTTRKIVDGRVVSETNDTRVLRH). Phosphoserine is present on residues S384, S391, S392, and S394. T397 bears the Phosphothreonine mark.

This sequence belongs to the intermediate filament family. In terms of assembly, heterotetramer of two type I and two type II keratins. KRT18 associates with KRT8. Interacts with PLEC isoform 1C, when in a heterodimer with KRT8. Interacts with PNN and mutated CFTR. Interacts with YWHAE, YWHAH and YWHAZ only when phosphorylated. Interacts with the thrombin-antithrombin complex. Interacts with DNAJB6, TCHP and TRADD. Interacts with FAM83H. Interacts with EPPK1. Interacts with PKP1 and PKP2. Phosphorylation increases by IL-6. Post-translationally, proteolytically cleaved by caspases during epithelial cell apoptosis. Cleavage occurs at Asp-231 by either caspase-3, caspas-6 or caspase-7. In terms of processing, O-GlcNAcylation increases solubility, and decreases stability by inducing proteasomal degradation. Expressed in endoderm, intestinal epithelial cells and in most extraembryonic tissues.

It localises to the nucleus matrix. It is found in the cytoplasm. The protein localises to the perinuclear region. Its subcellular location is the nucleus. The protein resides in the nucleolus. In terms of biological role, when phosphorylated, plays a role in filament reorganization. Involved in the delivery of mutated CFTR to the plasma membrane. Involved in the uptake of thrombin-antithrombin complexes by hepatic cells. Together with KRT8, is involved in interleukin-6 (IL-6)-mediated barrier protection. The chain is Keratin, type I cytoskeletal 18 (Krt18) from Mus musculus (Mouse).